Consider the following 158-residue polypeptide: Cyclic pyranopterin monophosphate synthase (158 aa).

Substrate is bound by residues 76–78 and 114–115; these read LCH and ME. Asp-129 is an active-site residue.

This sequence belongs to the MoaC family. As to quaternary structure, homohexamer; trimer of dimers.

The enzyme catalyses (8S)-3',8-cyclo-7,8-dihydroguanosine 5'-triphosphate = cyclic pyranopterin phosphate + diphosphate. It functions in the pathway cofactor biosynthesis; molybdopterin biosynthesis. In terms of biological role, catalyzes the conversion of (8S)-3',8-cyclo-7,8-dihydroguanosine 5'-triphosphate to cyclic pyranopterin monophosphate (cPMP). The chain is Cyclic pyranopterin monophosphate synthase from Shewanella woodyi (strain ATCC 51908 / MS32).